The primary structure comprises 81 residues: ATP synthase subunit c (81 aa).

2 consecutive transmembrane segments (helical) span residues 4–24 (MIAQ…AIGA) and 57–77 (VGLV…FVFA).

The protein belongs to the ATPase C chain family. In terms of assembly, F-type ATPases have 2 components, F(1) - the catalytic core - and F(0) - the membrane proton channel. F(1) has five subunits: alpha(3), beta(3), gamma(1), delta(1), epsilon(1). F(0) has three main subunits: a(1), b(2) and c(10-14). The alpha and beta chains form an alternating ring which encloses part of the gamma chain. F(1) is attached to F(0) by a central stalk formed by the gamma and epsilon chains, while a peripheral stalk is formed by the delta and b chains.

It is found in the cell membrane. Functionally, f(1)F(0) ATP synthase produces ATP from ADP in the presence of a proton or sodium gradient. F-type ATPases consist of two structural domains, F(1) containing the extramembraneous catalytic core and F(0) containing the membrane proton channel, linked together by a central stalk and a peripheral stalk. During catalysis, ATP synthesis in the catalytic domain of F(1) is coupled via a rotary mechanism of the central stalk subunits to proton translocation. In terms of biological role, key component of the F(0) channel; it plays a direct role in translocation across the membrane. A homomeric c-ring of between 10-14 subunits forms the central stalk rotor element with the F(1) delta and epsilon subunits. The protein is ATP synthase subunit c of Mycobacterium leprae (strain TN).